We begin with the raw amino-acid sequence, 78 residues long: Acyl carrier protein (78 aa).

A Carrier domain is found at 2–77 (SDSAEKVKKI…DAIDYIEANK (76 aa)). Ser-37 is modified (O-(pantetheine 4'-phosphoryl)serine).

Belongs to the acyl carrier protein (ACP) family. Post-translationally, 4'-phosphopantetheine is transferred from CoA to a specific serine of apo-ACP by AcpS. This modification is essential for activity because fatty acids are bound in thioester linkage to the sulfhydryl of the prosthetic group.

The protein localises to the cytoplasm. It participates in lipid metabolism; fatty acid biosynthesis. Its function is as follows. Carrier of the growing fatty acid chain in fatty acid biosynthesis. This is Acyl carrier protein from Sphingopyxis alaskensis (strain DSM 13593 / LMG 18877 / RB2256) (Sphingomonas alaskensis).